We begin with the raw amino-acid sequence, 183 residues long: ATP synthase subunit delta (183 aa).

The protein belongs to the ATPase delta chain family. F-type ATPases have 2 components, F(1) - the catalytic core - and F(0) - the membrane proton channel. F(1) has five subunits: alpha(3), beta(3), gamma(1), delta(1), epsilon(1). F(0) has three main subunits: a(1), b(2) and c(10-14). The alpha and beta chains form an alternating ring which encloses part of the gamma chain. F(1) is attached to F(0) by a central stalk formed by the gamma and epsilon chains, while a peripheral stalk is formed by the delta and b chains.

It localises to the cell inner membrane. Functionally, f(1)F(0) ATP synthase produces ATP from ADP in the presence of a proton or sodium gradient. F-type ATPases consist of two structural domains, F(1) containing the extramembraneous catalytic core and F(0) containing the membrane proton channel, linked together by a central stalk and a peripheral stalk. During catalysis, ATP synthesis in the catalytic domain of F(1) is coupled via a rotary mechanism of the central stalk subunits to proton translocation. This protein is part of the stalk that links CF(0) to CF(1). It either transmits conformational changes from CF(0) to CF(1) or is implicated in proton conduction. This Desulfovibrio desulfuricans (strain ATCC 27774 / DSM 6949 / MB) protein is ATP synthase subunit delta.